Here is a 219-residue protein sequence, read N- to C-terminus: Orotate phosphoribosyltransferase (219 aa).

5-phospho-alpha-D-ribose 1-diphosphate is bound at residue Lys26. 34 to 35 (FF) is a binding site for orotate. 5-phospho-alpha-D-ribose 1-diphosphate-binding positions include 72–73 (YK), Arg98, Lys99, Lys102, His104, and 124–132 (DDVITAGTA). Orotate-binding residues include Thr128 and Arg156.

This sequence belongs to the purine/pyrimidine phosphoribosyltransferase family. PyrE subfamily. In terms of assembly, homodimer. Requires Mg(2+) as cofactor.

It catalyses the reaction orotidine 5'-phosphate + diphosphate = orotate + 5-phospho-alpha-D-ribose 1-diphosphate. Its pathway is pyrimidine metabolism; UMP biosynthesis via de novo pathway; UMP from orotate: step 1/2. Its function is as follows. Catalyzes the transfer of a ribosyl phosphate group from 5-phosphoribose 1-diphosphate to orotate, leading to the formation of orotidine monophosphate (OMP). This chain is Orotate phosphoribosyltransferase, found in Stenotrophomonas maltophilia (strain K279a).